The primary structure comprises 89 residues: Small ribosomal subunit protein uS17 (89 aa).

It belongs to the universal ribosomal protein uS17 family. As to quaternary structure, part of the 30S ribosomal subunit.

Its function is as follows. One of the primary rRNA binding proteins, it binds specifically to the 5'-end of 16S ribosomal RNA. In Syntrophomonas wolfei subsp. wolfei (strain DSM 2245B / Goettingen), this protein is Small ribosomal subunit protein uS17.